We begin with the raw amino-acid sequence, 611 residues long: Dihydroxy-acid dehydratase (611 aa).

Aspartate 81 contacts Mg(2+). Cysteine 122 contacts [2Fe-2S] cluster. Residues aspartate 123 and lysine 124 each contribute to the Mg(2+) site. Lysine 124 is modified (N6-carboxylysine). Cysteine 195 is a [2Fe-2S] cluster binding site. Glutamate 491 contacts Mg(2+). Catalysis depends on serine 517, which acts as the Proton acceptor.

The protein belongs to the IlvD/Edd family. In terms of assembly, homodimer. It depends on [2Fe-2S] cluster as a cofactor. Mg(2+) serves as cofactor.

The enzyme catalyses (2R)-2,3-dihydroxy-3-methylbutanoate = 3-methyl-2-oxobutanoate + H2O. The catalysed reaction is (2R,3R)-2,3-dihydroxy-3-methylpentanoate = (S)-3-methyl-2-oxopentanoate + H2O. Its pathway is amino-acid biosynthesis; L-isoleucine biosynthesis; L-isoleucine from 2-oxobutanoate: step 3/4. The protein operates within amino-acid biosynthesis; L-valine biosynthesis; L-valine from pyruvate: step 3/4. Functionally, functions in the biosynthesis of branched-chain amino acids. Catalyzes the dehydration of (2R,3R)-2,3-dihydroxy-3-methylpentanoate (2,3-dihydroxy-3-methylvalerate) into 2-oxo-3-methylpentanoate (2-oxo-3-methylvalerate) and of (2R)-2,3-dihydroxy-3-methylbutanoate (2,3-dihydroxyisovalerate) into 2-oxo-3-methylbutanoate (2-oxoisovalerate), the penultimate precursor to L-isoleucine and L-valine, respectively. The chain is Dihydroxy-acid dehydratase from Pasteurella multocida (strain Pm70).